Here is a 330-residue protein sequence, read N- to C-terminus: Phenylalanine--tRNA ligase alpha subunit (330 aa).

Mg(2+) is bound at residue E255.

Belongs to the class-II aminoacyl-tRNA synthetase family. Phe-tRNA synthetase alpha subunit type 1 subfamily. Tetramer of two alpha and two beta subunits. Mg(2+) is required as a cofactor.

The protein resides in the cytoplasm. The catalysed reaction is tRNA(Phe) + L-phenylalanine + ATP = L-phenylalanyl-tRNA(Phe) + AMP + diphosphate + H(+). The chain is Phenylalanine--tRNA ligase alpha subunit from Acinetobacter baumannii (strain SDF).